Consider the following 1091-residue polypeptide: DNA mismatch repair protein Msh3 (1091 aa).

2 stretches are compositionally biased toward low complexity: residues 1–15 (MPRG…TAAG) and 24–40 (LSRF…SASS). Residues 1-84 (MPRGKSASGG…EENISVASHH (84 aa)) form a disordered region. Serine 33 carries the post-translational modification Phosphoserine. Over residues 43–54 (PAEKVTEGDSRK) the composition is skewed to basic and acidic residues. 850-857 (GPNMGGKS) serves as a coordination point for ATP.

The protein belongs to the DNA mismatch repair MutS family. MSH3 subfamily. Component of the DNA mismatch repair (MMR) complex composed at least of MSH2, MSH3, MSH6, PMS1 and MLH1. Heterodimer consisting of MSH2-MSH3 (MutS beta). Forms a ternary complex with MutL alpha (MLH1-PMS1). Interacts with EXO1. Interacts with MCM9.

In terms of biological role, component of the post-replicative DNA mismatch repair system (MMR). Heterodimerizes with MSH2 to form MutS beta which binds to DNA mismatches thereby initiating DNA repair. When bound, the MutS beta heterodimer bends the DNA helix and shields approximately 20 base pairs. MutS beta recognizes large insertion-deletion loops (IDL) up to 13 nucleotides long. After mismatch binding, forms a ternary complex with the MutL alpha heterodimer, which is thought to be responsible for directing the downstream MMR events, including strand discrimination, excision, and resynthesis. This Mus musculus (Mouse) protein is DNA mismatch repair protein Msh3 (Msh3).